Consider the following 251-residue polypeptide: Flap endonuclease Xni (251 aa).

Asp104 contacts Mg(2+). In terms of domain architecture, 5'-3' exonuclease spans 160-249 (VSPGQLADFW…LDGNLQQLRL (90 aa)). K(+) is bound by residues Leu171, Ala172, Pro180, Val182, and Ile185. Residues 184 to 189 (GIGPKS) form an interaction with DNA region.

Belongs to the Xni family. The cofactor is Mg(2+). It depends on K(+) as a cofactor.

In terms of biological role, has flap endonuclease activity. During DNA replication, flap endonucleases cleave the 5'-overhanging flap structure that is generated by displacement synthesis when DNA polymerase encounters the 5'-end of a downstream Okazaki fragment. The protein is Flap endonuclease Xni of Cronobacter sakazakii (strain ATCC BAA-894) (Enterobacter sakazakii).